The following is a 692-amino-acid chain: Elongation factor G (692 aa).

The region spanning 8–282 is the tr-type G domain; sequence AKTRNIGIMA…AVIAYLPSPL (275 aa). GTP-binding positions include 17-24, 81-85, and 135-138; these read AHVDAGKT, DTPGH, and NKMD.

It belongs to the TRAFAC class translation factor GTPase superfamily. Classic translation factor GTPase family. EF-G/EF-2 subfamily.

It localises to the cytoplasm. Its function is as follows. Catalyzes the GTP-dependent ribosomal translocation step during translation elongation. During this step, the ribosome changes from the pre-translocational (PRE) to the post-translocational (POST) state as the newly formed A-site-bound peptidyl-tRNA and P-site-bound deacylated tRNA move to the P and E sites, respectively. Catalyzes the coordinated movement of the two tRNA molecules, the mRNA and conformational changes in the ribosome. The protein is Elongation factor G of Streptococcus equi subsp. equi (strain 4047).